The chain runs to 98 residues: Small ribosomal subunit protein eS24 (98 aa).

The protein belongs to the eukaryotic ribosomal protein eS24 family. In terms of assembly, part of the 30S ribosomal subunit.

The sequence is that of Small ribosomal subunit protein eS24 from Thermococcus kodakarensis (strain ATCC BAA-918 / JCM 12380 / KOD1) (Pyrococcus kodakaraensis (strain KOD1)).